Consider the following 492-residue polypeptide: Gamma-aminobutyric acid receptor subunit alpha-3 (492 aa).

Residues 1–28 (MIITQTSHCYMTSLGILFLINILPGTTG) form the signal peptide. The segment at 28–54 (GQGESRRQEPGDFVKQDIGGLSPKHAP) is disordered. The Extracellular segment spans residues 29 to 274 (QGESRRQEPG…MTTHFHLKRK (246 aa)). Basic and acidic residues predominate over residues 31–42 (ESRRQEPGDFVK). A glycan (N-linked (GlcNAc...) asparagine) is linked at N63. R119 is a 4-aminobutanoate binding site. 2 N-linked (GlcNAc...) asparagine glycosylation sites follow: N163 and N176. T182 serves as a coordination point for 4-aminobutanoate. A disulfide bridge links C191 with C205. An N-linked (GlcNAc...) asparagine glycan is attached at N228. Residues 275–295 (IGYFVIQTYLPCIMTVILSQV) traverse the membrane as a helical segment. The Cytoplasmic portion of the chain corresponds to 296–305 (SFWLNRESVP). Residues 306-325 (ARTVFGVTTVLTMTTLSISA) traverse the membrane as a helical segment. Over 326–336 (RNSLPKVAYAT) the chain is Extracellular. A helical transmembrane segment spans residues 337 to 357 (AMDWFIAVCYAFVFSALIEFA). The Cytoplasmic portion of the chain corresponds to 358 to 457 (TVNYFTKRSW…TYNSVSKVDK (100 aa)). A Phosphoserine modification is found at S426. The residue at position 427 (T427) is a Phosphothreonine. S433 and S442 each carry phosphoserine. Residues 458 to 478 (ISRIIFPVLFAIFNLVYWATY) form a helical membrane-spanning segment. Residues 479 to 492 (VNRESAIKGMIRKQ) are Extracellular-facing.

Belongs to the ligand-gated ion channel (TC 1.A.9) family. Gamma-aminobutyric acid receptor (TC 1.A.9.5) subfamily. GABRA3 sub-subfamily. In terms of assembly, heteropentamer, formed by a combination of alpha (GABRA1-6), beta (GABRB1-3), gamma (GABRG1-3), delta (GABRD), epsilon (GABRE), rho (GABRR1-3), pi (GABRP) and theta (GABRQ) chains, each subunit exhibiting distinct physiological and pharmacological properties. Binds UBQLN1. Interacts with GPHN.

The protein resides in the postsynaptic cell membrane. The protein localises to the cell membrane. It carries out the reaction chloride(in) = chloride(out). Potentiated by etomidate, propofol, pregnanolone and flurazepam. Its function is as follows. Alpha subunit of the heteropentameric ligand-gated chloride channel gated by gamma-aminobutyric acid (GABA), a major inhibitory neurotransmitter in the brain. GABA-gated chloride channels, also named GABA(A) receptors (GABAAR), consist of five subunits arranged around a central pore and contain GABA active binding site(s) located at the alpha and beta subunit interface(s). When activated by GABA, GABAARs selectively allow the flow of chloride anions across the cell membrane down their electrochemical gradient. Chloride influx into the postsynaptic neuron following GABAAR opening decreases the neuron ability to generate a new action potential, thereby reducing nerve transmission. This is Gamma-aminobutyric acid receptor subunit alpha-3 from Homo sapiens (Human).